Consider the following 419-residue polypeptide: Divinyl chlorophyllide a 8-vinyl-reductase, chloroplastic (419 aa).

A chloroplast-targeting transit peptide spans 1–71; sequence MSICSTVGAG…PIVVSSTPVV (71 aa).

The protein localises to the plastid. It localises to the chloroplast. The catalysed reaction is protochlorophyllide a + NADP(+) = 3,8-divinyl protochlorophyllide a + NADPH + H(+). Its pathway is porphyrin-containing compound metabolism; chlorophyll biosynthesis. Functionally, catalyzes the conversion of divinyl chlorophyllide to monovinyl chlorophyllide. Reduces the 8-vinyl group of the tetrapyrrole to an ethyl group using NADPH as the reductant. The best substrate is (3,8-divinyl)-chlorophyllide a (DV-Chlidea). Very low activity with (3,8-divinyl)-protochlorophyllide a (DV-Pchlidea) and (3,8-divinyl)-magnesium-protoporphyrin IX monomethyl ester (DV-MPE). No activity with (3,8-divinyl)-magnesium-protoporphyrin IX (DV-Mg-Proto) and (3,8-divinyl)-chlorophyll a (DV-Chla). In Cucumis sativus (Cucumber), this protein is Divinyl chlorophyllide a 8-vinyl-reductase, chloroplastic (DVR).